Here is a 240-residue protein sequence, read N- to C-terminus: Small ribosomal subunit protein uS2 (240 aa).

This sequence belongs to the universal ribosomal protein uS2 family. As to quaternary structure, component of the small ribosomal subunit. Mature ribosomes consist of a small (40S) and a large (60S) subunit. The 40S subunit contains about 33 different proteins and 1 molecule of RNA (18S). The 60S subunit contains about 49 different proteins and 3 molecules of RNA (25S, 5.8S and 5S). Interacts with RPS21.

It localises to the cytoplasm. In terms of biological role, required for the assembly and/or stability of the 40S ribosomal subunit. Required for the processing of the 20S rRNA-precursor to mature 18S rRNA in a late step of the maturation of 40S ribosomal subunits. The protein is Small ribosomal subunit protein uS2 of Enterocytozoon bieneusi (strain H348) (Microsporidian parasite).